Here is a 223-residue protein sequence, read N- to C-terminus: Endonuclease V (223 aa).

2 residues coordinate Mg(2+): Asp-45 and Asp-113.

This sequence belongs to the endonuclease V family. Requires Mg(2+) as cofactor.

It is found in the cytoplasm. The catalysed reaction is Endonucleolytic cleavage at apurinic or apyrimidinic sites to products with a 5'-phosphate.. Functionally, DNA repair enzyme involved in the repair of deaminated bases. Selectively cleaves double-stranded DNA at the second phosphodiester bond 3' to a deoxyinosine leaving behind the intact lesion on the nicked DNA. The chain is Endonuclease V from Dehalococcoides mccartyi (strain CBDB1).